The following is a 792-amino-acid chain: 5-methyltetrahydropteroyltriglutamate--homocysteine methyltransferase (792 aa).

5-methyltetrahydropteroyltri-L-glutamate contacts are provided by residues Arg-16–Lys-19 and Lys-112. L-homocysteine contacts are provided by residues Ile-432–Ser-434 and Glu-485. Residues Ile-432–Ser-434 and Glu-485 contribute to the L-methionine site. Residues Arg-516–Cys-517 and Trp-562 each bind 5-methyltetrahydropteroyltri-L-glutamate. Asp-600 is an L-homocysteine binding site. Asp-600 serves as a coordination point for L-methionine. Residue Glu-606 coordinates 5-methyltetrahydropteroyltri-L-glutamate. Zn(2+) is bound by residues His-642, Cys-644, and Glu-666. The active-site Proton donor is the His-695. Cys-727 serves as a coordination point for Zn(2+).

This sequence belongs to the vitamin-B12 independent methionine synthase family. Zn(2+) is required as a cofactor.

The enzyme catalyses 5-methyltetrahydropteroyltri-L-glutamate + L-homocysteine = tetrahydropteroyltri-L-glutamate + L-methionine. It participates in amino-acid biosynthesis; L-methionine biosynthesis via de novo pathway; L-methionine from L-homocysteine (MetE route): step 1/1. Its function is as follows. Catalyzes the transfer of a methyl group from 5-methyltetrahydrofolate to homocysteine resulting in methionine formation. In Cupriavidus necator (strain ATCC 17699 / DSM 428 / KCTC 22496 / NCIMB 10442 / H16 / Stanier 337) (Ralstonia eutropha), this protein is 5-methyltetrahydropteroyltriglutamate--homocysteine methyltransferase.